The primary structure comprises 429 residues: MSDSKEDIRNGQEEDDLFSENEDNHTSQQDELINGHIENDSETAVSDDGLFSNTEEATEAPEADVPVKKVLEVAVPNFKSPASASNDVFHAHIPNFLSVEQTPYDPEQYAAEAEADAALLEHDAHWGQRIKHKVDNTVRWRLGPSGSYQSNAQIVQWSDGSYSLRIGNDIYDTQNKLISQPTFVTASHEAQHLLRVQTSFKSSFTFLPSAINTATRSKLPSMRLTTVQVPSRSVQEIIIEKDPELLKRQAEKYEEERSRARRRLEKRKQLNNYQNGTGEEEEDYSSFYGPRSTYSEQNEIIDSDRMDRLKRIKQEGAGQYRGYNKDLEENEEDDLGDFIAEEEEEEEQEEEQEEDEEDEEEVGAGSDIKGFDADKEASVARATINKYEDDEVIPSAVETDRSETVTETSVGDGSVQRRVKRRIVESDSE.

Basic and acidic residues predominate over residues 1 to 12 (MSDSKEDIRNGQ). Disordered regions lie at residues 1–63 (MSDS…APEA), 257–306 (RSRA…SDRM), and 320–429 (YRGY…SDSE). The segment covering 328-362 (EENEEDDLGDFIAEEEEEEEQEEEQEEDEEDEEEV) has biased composition (acidic residues). Over residues 369 to 378 (KGFDADKEAS) the composition is skewed to basic and acidic residues.

This sequence belongs to the LEO1 family.

It is found in the nucleus. This is an uncharacterized protein from Schizosaccharomyces pombe (strain 972 / ATCC 24843) (Fission yeast).